Reading from the N-terminus, the 103-residue chain is Co-chaperonin GroES (103 aa).

This sequence belongs to the GroES chaperonin family. Heptamer of 7 subunits arranged in a ring. Interacts with the chaperonin GroEL.

It is found in the cytoplasm. Its function is as follows. Together with the chaperonin GroEL, plays an essential role in assisting protein folding. The GroEL-GroES system forms a nano-cage that allows encapsulation of the non-native substrate proteins and provides a physical environment optimized to promote and accelerate protein folding. GroES binds to the apical surface of the GroEL ring, thereby capping the opening of the GroEL channel. The polypeptide is Co-chaperonin GroES (Synechocystis sp. (strain ATCC 27184 / PCC 6803 / Kazusa)).